The primary structure comprises 367 residues: Germination protease (367 aa).

The propeptide occupies 1–15 (MKEPLDLSKYSVRTD).

It belongs to the peptidase A25 family. As to quaternary structure, homotetramer. In terms of processing, autoproteolytically processed. The inactive tetrameric zymogen termed p46 autoprocesses to a smaller form termed p41, which is active only during spore germination.

The enzyme catalyses Endopeptidase action with P4 Glu or Asp, P1 preferably Glu &gt; Asp, P1' hydrophobic and P2' Ala.. Functionally, initiates the rapid degradation of small, acid-soluble proteins during spore germination. This is Germination protease from Bacillus cereus (strain AH187).